The primary structure comprises 208 residues: Uracil phosphoribosyltransferase (208 aa).

5-phospho-alpha-D-ribose 1-diphosphate-binding positions include arginine 78, arginine 103, and 130–138; that span reads DPMLATGGS. Residues isoleucine 193 and 198–200 each bind uracil; that span reads GDA. Position 199 (aspartate 199) interacts with 5-phospho-alpha-D-ribose 1-diphosphate.

The protein belongs to the UPRTase family. Mg(2+) is required as a cofactor.

The enzyme catalyses UMP + diphosphate = 5-phospho-alpha-D-ribose 1-diphosphate + uracil. It functions in the pathway pyrimidine metabolism; UMP biosynthesis via salvage pathway; UMP from uracil: step 1/1. Its activity is regulated as follows. Allosterically activated by GTP. Functionally, catalyzes the conversion of uracil and 5-phospho-alpha-D-ribose 1-diphosphate (PRPP) to UMP and diphosphate. This Pectobacterium carotovorum subsp. carotovorum (strain PC1) protein is Uracil phosphoribosyltransferase.